Reading from the N-terminus, the 368-residue chain is 1-deoxy-D-xylulose 5-phosphate reductoisomerase (368 aa).

NADPH is bound by residues Thr-10, Gly-11, Ser-12, Ile-13, Gln-38, and Asn-100. Residue Lys-101 participates in 1-deoxy-D-xylulose 5-phosphate binding. Glu-102 serves as a coordination point for NADPH. Position 125 (Asp-125) interacts with Mn(2+). The 1-deoxy-D-xylulose 5-phosphate site is built by Ser-126, Glu-127, Ser-151, and His-172. Mn(2+) is bound at residue Glu-127. Gly-178 contacts NADPH. The 1-deoxy-D-xylulose 5-phosphate site is built by Ser-185, Asn-190, Lys-191, and Glu-194. Glu-194 contacts Mn(2+).

This sequence belongs to the DXR family. Mg(2+) is required as a cofactor. It depends on Mn(2+) as a cofactor.

The enzyme catalyses 2-C-methyl-D-erythritol 4-phosphate + NADP(+) = 1-deoxy-D-xylulose 5-phosphate + NADPH + H(+). Its pathway is isoprenoid biosynthesis; isopentenyl diphosphate biosynthesis via DXP pathway; isopentenyl diphosphate from 1-deoxy-D-xylulose 5-phosphate: step 1/6. Functionally, catalyzes the NADPH-dependent rearrangement and reduction of 1-deoxy-D-xylulose-5-phosphate (DXP) to 2-C-methyl-D-erythritol 4-phosphate (MEP). This Tropheryma whipplei (strain TW08/27) (Whipple's bacillus) protein is 1-deoxy-D-xylulose 5-phosphate reductoisomerase.